Here is a 60-residue protein sequence, read N- to C-terminus: Ribosome biogenesis protein Nop10 (60 aa).

This sequence belongs to the NOP10 family.

Its function is as follows. Involved in ribosome biogenesis; more specifically in 18S rRNA pseudouridylation and in cleavage of pre-rRNA. The protein is Ribosome biogenesis protein Nop10 of Haloquadratum walsbyi (strain DSM 16790 / HBSQ001).